The following is a 673-amino-acid chain: DNA ligase (673 aa).

NAD(+) is bound by residues 35–39, 84–85, and Glu-115; these read DAEYD and SL. Residue Lys-117 is the N6-AMP-lysine intermediate of the active site. Positions 138, 175, 292, and 316 each coordinate NAD(+). Positions 410, 413, 428, and 434 each coordinate Zn(2+). Residues 592-673 enclose the BRCT domain; the sequence is PRKLPLQGLV…FLDLLERGRP (82 aa).

The protein belongs to the NAD-dependent DNA ligase family. LigA subfamily. The cofactor is Mg(2+). Mn(2+) serves as cofactor.

It carries out the reaction NAD(+) + (deoxyribonucleotide)n-3'-hydroxyl + 5'-phospho-(deoxyribonucleotide)m = (deoxyribonucleotide)n+m + AMP + beta-nicotinamide D-nucleotide.. DNA ligase that catalyzes the formation of phosphodiester linkages between 5'-phosphoryl and 3'-hydroxyl groups in double-stranded DNA using NAD as a coenzyme and as the energy source for the reaction. It is essential for DNA replication and repair of damaged DNA. The protein is DNA ligase of Methylococcus capsulatus (strain ATCC 33009 / NCIMB 11132 / Bath).